Here is an 817-residue protein sequence, read N- to C-terminus: Collagen-like protein 4 (817 aa).

Collagen-like domains lie at Gly-83–Asp-142, Gly-145–Asp-264, and Gly-268–Lys-327. 3 disordered regions span residues Asn-87–Gly-107, Phe-120–Asp-458, and Ile-479–Ile-543. N-linked (GlcNAc...) asparagine; by host glycosylation is found at Asn-106 and Asn-121. Basic and acidic residues-rich tracts occupy residues Ile-126–Gln-141 and Gln-149–Ile-161. Asn-183 carries an N-linked (GlcNAc...) asparagine; by host glycan. Basic and acidic residues-rich tracts occupy residues Ile-212–Ile-224 and Ser-233–Thr-245. Residues Lys-246–Ser-260 show a composition bias toward low complexity. A compositionally biased stretch (basic and acidic residues) spans Lys-294–Lys-341. 2 N-linked (GlcNAc...) asparagine; by host glycosylation sites follow: Asn-345 and Asn-360. 2 consecutive Collagen-like domains span residues Gly-352–Val-411 and Gly-430–Lys-489. Basic and acidic residues-rich tracts occupy residues Lys-354–Asp-368, Ser-377–Leu-390, and Ser-428–Asp-458. The segment covering Ile-480–Asn-494 has biased composition (low complexity). N-linked (GlcNAc...) asparagine; by host glycosylation occurs at Asn-483. 3 stretches are compositionally biased toward basic and acidic residues: residues Lys-495 to Thr-504, Ile-515 to Lys-525, and Glu-533 to Ile-543. Residues Thr-512 to Ser-570 form the Collagen-like 6 domain. Residues Asn-709, Asn-712, and Asn-715 are each glycosylated (N-linked (GlcNAc...) asparagine; by host). Positions Gly-757–Gly-771 are enriched in gly residues. Residues Gly-757–Gly-804 form a disordered region. The N-linked (GlcNAc...) asparagine; by host glycan is linked to Asn-772.

Post-translationally, may be hydroxylated on lysine by the viral-encoded procollagen-lysine,2-oxoglutarate 5-dioxygenase.

The protein localises to the virion. May participate in the formation of a layer of cross-linked glycosylated fibrils at the viral surface thus giving it a hairy-like appearance. This Acanthamoeba polyphaga (Amoeba) protein is Collagen-like protein 4.